Here is a 146-residue protein sequence, read N- to C-terminus: Snaclec 1 (146 aa).

The N-terminal stretch at 1–23 (MGRFIFMSFGLLVVFLSLSGTGA) is a signal peptide. Cystine bridges form between C25-C36, C53-C142, and C119-C134. The C-type lectin domain occupies 32–143 (YEGHCYRVFQ…CSRTYSFVCK (112 aa)).

It belongs to the snaclec family. In terms of assembly, heterodimer; disulfide-linked. In terms of tissue distribution, expressed by the venom gland.

The protein localises to the secreted. Functionally, interferes with one step of hemostasis (modulation of platelet aggregation, or coagulation cascade, for example). This Sistrurus catenatus edwardsii (Desert massasauga) protein is Snaclec 1.